The following is a 252-amino-acid chain: Imidazole glycerol phosphate synthase subunit HisF (252 aa).

Active-site residues include D11 and D130.

It belongs to the HisA/HisF family. As to quaternary structure, heterodimer of HisH and HisF.

The protein resides in the cytoplasm. It carries out the reaction 5-[(5-phospho-1-deoxy-D-ribulos-1-ylimino)methylamino]-1-(5-phospho-beta-D-ribosyl)imidazole-4-carboxamide + L-glutamine = D-erythro-1-(imidazol-4-yl)glycerol 3-phosphate + 5-amino-1-(5-phospho-beta-D-ribosyl)imidazole-4-carboxamide + L-glutamate + H(+). It functions in the pathway amino-acid biosynthesis; L-histidine biosynthesis; L-histidine from 5-phospho-alpha-D-ribose 1-diphosphate: step 5/9. IGPS catalyzes the conversion of PRFAR and glutamine to IGP, AICAR and glutamate. The HisF subunit catalyzes the cyclization activity that produces IGP and AICAR from PRFAR using the ammonia provided by the HisH subunit. The sequence is that of Imidazole glycerol phosphate synthase subunit HisF from Geobacillus kaustophilus (strain HTA426).